The chain runs to 830 residues: Formin-like protein 14 (830 aa).

Positions 1–34 (MAMAMAMPSSSPPLFFSLLNLMLLLLLLAPYCSA) are cleaved as a signal peptide. Over residues 40–59 (NNTHHRSSSPTQTTLQQLHS) the composition is skewed to polar residues. The disordered stretch occupies residues 40–195 (NNTHHRSSSP…NISTLVHPTQ (156 aa)). Composition is skewed to pro residues over residues 61 to 86 (DSPPPPPLPTPTVTTPTPPPPPPAPR) and 95 to 135 (PPPP…PTPK). Over residues 149 to 160 (YPFTNYPFFPNF) the composition is skewed to low complexity. The chain crosses the membrane as a helical span at residues 203–223 (VLQALLLSFLSLCLLLLSALL). Positions 235 to 446 (HHSHSHPNAR…LHSDKLKPGS (212 aa)) are disordered. Over residues 314-323 (RPLPPLPRVG) the composition is skewed to pro residues. The span at 324 to 369 (PPSGEFASRSSASDPSTAPPAAAEASSSSLSPSSPSASSPTLGSSP) shows a compositional bias: low complexity. Residues 390–823 (PKRRPQPPEP…MMGRDWNMAA (434 aa)) form the FH2 domain. Positions 424–446 (HSPSEKSMRKSRPLHSDKLKPGS) are enriched in basic and acidic residues.

This sequence belongs to the formin-like family. Class-I subfamily.

The protein localises to the membrane. The chain is Formin-like protein 14 (FH14) from Oryza sativa subsp. japonica (Rice).